Reading from the N-terminus, the 61-residue chain is Putative antitoxin VapB21 (61 aa).

This sequence belongs to the UPF0165 family.

Possibly the antitoxin component of a type II toxin-antitoxin (TA) system. Its cognate toxin is VapC21 (Potential). The chain is Putative antitoxin VapB21 (vapB21) from Archaeoglobus fulgidus (strain ATCC 49558 / DSM 4304 / JCM 9628 / NBRC 100126 / VC-16).